The following is a 367-amino-acid chain: MSGNTFGTLFTVTTFGESHGPALGGVVDGCPPGLALTEADLQVELDRRRPGRSKHTTQRRESDQVQILSGVFEGVTTGTPIGLLIENTDQRSKDYSEIAQRFRPGHADYTYQQKYGVRDYRGGGRSSARETAVRVAAGAIARRYLAQRLGIEIRGRLAQMGGIELGAEDWSAVDDNDFFCADPARIPELEALIQEVRKAGDSVGAAVEVEVRHVPPGLGEPVFDRLDADLAKALMSINAVKGVEVGAGMAAAGQRGSAHRDELTPAGFAGNQSGGVLGGISSGQDLVVRAALKPTSSMLIPGRSVDVHGEPVSVVTKGRHDPCVGIRAVPIAEAMAALVVMDHWLRHRAQNADVESGTPVLPARDRE.

Residue Arg48 coordinates NADP(+). FMN is bound by residues 125 to 127 (RSS), 238 to 239 (NA), Gly278, 293 to 297 (KPTSS), and Arg319.

The protein belongs to the chorismate synthase family. Homotetramer. Requires FMNH2 as cofactor.

It catalyses the reaction 5-O-(1-carboxyvinyl)-3-phosphoshikimate = chorismate + phosphate. It participates in metabolic intermediate biosynthesis; chorismate biosynthesis; chorismate from D-erythrose 4-phosphate and phosphoenolpyruvate: step 7/7. Its function is as follows. Catalyzes the anti-1,4-elimination of the C-3 phosphate and the C-6 proR hydrogen from 5-enolpyruvylshikimate-3-phosphate (EPSP) to yield chorismate, which is the branch point compound that serves as the starting substrate for the three terminal pathways of aromatic amino acid biosynthesis. This reaction introduces a second double bond into the aromatic ring system. This chain is Chorismate synthase, found in Halorhodospira halophila (strain DSM 244 / SL1) (Ectothiorhodospira halophila (strain DSM 244 / SL1)).